A 442-amino-acid polypeptide reads, in one-letter code: Lipoyl synthase, apicoplast (442 aa).

The signal sequence occupies residues 1-25 (MHVLTPSLYIYAFFIVCVRLKCGRS). Residues 92 to 154 (LLRSESATDE…EKKPDWFHVP (63 aa)) are disordered. Positions 109–127 (LKEKLKESPANWGKDKQEE) are enriched in basic and acidic residues. Cys-177, Cys-182, Cys-188, Cys-203, Cys-207, Cys-210, and Ser-418 together coordinate [4Fe-4S] cluster. Residues 189-407 (WNIGTATIML…KEEGMKMGFK (219 aa)) enclose the Radical SAM core domain.

This sequence belongs to the radical SAM superfamily. Lipoyl synthase family. Requires [4Fe-4S] cluster as cofactor.

It localises to the plastid. The protein resides in the apicoplast. It catalyses the reaction [[Fe-S] cluster scaffold protein carrying a second [4Fe-4S](2+) cluster] + N(6)-octanoyl-L-lysyl-[protein] + 2 oxidized [2Fe-2S]-[ferredoxin] + 2 S-adenosyl-L-methionine + 4 H(+) = [[Fe-S] cluster scaffold protein] + N(6)-[(R)-dihydrolipoyl]-L-lysyl-[protein] + 4 Fe(3+) + 2 hydrogen sulfide + 2 5'-deoxyadenosine + 2 L-methionine + 2 reduced [2Fe-2S]-[ferredoxin]. It participates in protein modification; protein lipoylation via endogenous pathway; protein N(6)-(lipoyl)lysine from octanoyl-[acyl-carrier-protein]: step 2/2. In terms of biological role, catalyzes the radical-mediated insertion of two sulfur atoms into the C-6 and C-8 positions of the octanoyl moiety bound to the lipoyl domains of lipoate-dependent enzymes, thereby converting the octanoylated domains into lipoylated derivatives. In Plasmodium vivax (strain Salvador I), this protein is Lipoyl synthase, apicoplast.